We begin with the raw amino-acid sequence, 509 residues long: Protein disulfide-isomerase (509 aa).

An N-terminal signal peptide occupies residues 1-19 (MLSRSLLCLALAWVARVGA). One can recognise a Thioredoxin 1 domain in the interval 20 to 136 (DAPEEEDNVL…IVNWLKKRTG (117 aa)). Catalysis depends on nucleophile residues cysteine 55 and cysteine 58. Cysteines 55 and 58 form a disulfide. Lysine 202 is subject to N6-acetyllysine. N6-succinyllysine is present on residues lysine 224 and lysine 273. A phosphoserine mark is found at serine 333 and serine 359. The Thioredoxin 2 domain maps to 335-477 (ELTAEKITEF…FKKFLESGGQ (143 aa)). Residues cysteine 399 and cysteine 402 each act as nucleophile in the active site. A disulfide bridge connects residues cysteine 399 and cysteine 402. At serine 429 the chain carries Phosphoserine. The tract at residues 473–509 (ESGGQDGAGDDDDVDLEEALEPDMEEDDDQKAVKDEL) is disordered. Acidic residues predominate over residues 480–501 (AGDDDDVDLEEALEPDMEEDDD). The short motif at 506–509 (KDEL) is the Prevents secretion from ER element.

Belongs to the protein disulfide isomerase family. Heterodimer; heterodimerizes with the protein microsomal triglyceride transfer MTTP. Homodimer. Homodimer. Monomers and homotetramers may also occur. Interacts with P4HA2, forming a heterotetramer consisting of 2 alpha subunits (P4HA2) and 2 beta (P4HB), where P4HB plays the role of a structural subunit; this tetramer catalyzes the formation of 4-hydroxyproline in collagen. Also constitutes the structural subunit of the microsomal triacylglycerol transfer protein MTTP in mammalian cells. Stabilizes both enzymes and retain them in the ER without contributing to the catalytic activity. Binds UBQLN1. Interacts with ERO1B. Interacts with ILDR2. Interacts with ERN1/IRE1A (via N-terminus); the interaction is enhanced by phosphorylation of P4HB by FAM20C in response to endoplasmic reticulum stress and results in attenuation of ERN1 activity. In terms of processing, phosphorylation of Ser-359 by FAM20C is induced by endoplasmic reticulum stress and results in a functional switch from oxidoreductase to molecular chaperone. It also promotes interaction with ERN1.

Its subcellular location is the endoplasmic reticulum. It localises to the endoplasmic reticulum lumen. The protein localises to the melanosome. The protein resides in the cell membrane. The enzyme catalyses Catalyzes the rearrangement of -S-S- bonds in proteins.. Functionally, this multifunctional protein catalyzes the formation, breakage and rearrangement of disulfide bonds. At the cell surface, seems to act as a reductase that cleaves disulfide bonds of proteins attached to the cell. May therefore cause structural modifications of exofacial proteins. Inside the cell, seems to form/rearrange disulfide bonds of nascent proteins. At high concentrations and following phosphorylation by FAM20C, functions as a chaperone that inhibits aggregation of misfolded proteins. At low concentrations, facilitates aggregation (anti-chaperone activity). May be involved with other chaperones in the structural modification of the TG precursor in hormone biogenesis. Also acts as a structural subunit of various enzymes such as prolyl 4-hydroxylase and microsomal triacylglycerol transfer protein MTTP. Receptor for LGALS9; the interaction retains P4HB at the cell surface of Th2 T helper cells, increasing disulfide reductase activity at the plasma membrane, altering the plasma membrane redox state and enhancing cell migration. In Cricetulus griseus (Chinese hamster), this protein is Protein disulfide-isomerase (P4HB).